Consider the following 227-residue polypeptide: tRNA (guanine-N(7)-)-methyltransferase (227 aa).

Residues E58, E83, D110, and D132 each contribute to the S-adenosyl-L-methionine site. D132 is an active-site residue. Substrate-binding positions include K136, D168, and 205 to 208 (TRFE).

It belongs to the class I-like SAM-binding methyltransferase superfamily. TrmB family.

It carries out the reaction guanosine(46) in tRNA + S-adenosyl-L-methionine = N(7)-methylguanosine(46) in tRNA + S-adenosyl-L-homocysteine. It functions in the pathway tRNA modification; N(7)-methylguanine-tRNA biosynthesis. Catalyzes the formation of N(7)-methylguanine at position 46 (m7G46) in tRNA. The polypeptide is tRNA (guanine-N(7)-)-methyltransferase (Acidithiobacillus ferrooxidans (strain ATCC 23270 / DSM 14882 / CIP 104768 / NCIMB 8455) (Ferrobacillus ferrooxidans (strain ATCC 23270))).